A 743-amino-acid polypeptide reads, in one-letter code: 1,4-alpha-glucan branching enzyme GlgB (743 aa).

D423 (nucleophile) is an active-site residue. The Proton donor role is filled by E476.

This sequence belongs to the glycosyl hydrolase 13 family. GlgB subfamily. Monomer.

It catalyses the reaction Transfers a segment of a (1-&gt;4)-alpha-D-glucan chain to a primary hydroxy group in a similar glucan chain.. Its pathway is glycan biosynthesis; glycogen biosynthesis. Its function is as follows. Catalyzes the formation of the alpha-1,6-glucosidic linkages in glycogen by scission of a 1,4-alpha-linked oligosaccharide from growing alpha-1,4-glucan chains and the subsequent attachment of the oligosaccharide to the alpha-1,6 position. The protein is 1,4-alpha-glucan branching enzyme GlgB of Pseudomonas fluorescens (strain Pf0-1).